A 541-amino-acid chain; its full sequence is Chaperonin GroEL (541 aa).

Residues 29 to 32 (TLGP), 86 to 90 (DGTTT), glycine 413, 478 to 480 (DAL), and aspartate 494 contribute to the ATP site.

It belongs to the chaperonin (HSP60) family. In terms of assembly, forms a cylinder of 14 subunits composed of two heptameric rings stacked back-to-back. Interacts with the co-chaperonin GroES.

It localises to the cytoplasm. It carries out the reaction ATP + H2O + a folded polypeptide = ADP + phosphate + an unfolded polypeptide.. Together with its co-chaperonin GroES, plays an essential role in assisting protein folding. The GroEL-GroES system forms a nano-cage that allows encapsulation of the non-native substrate proteins and provides a physical environment optimized to promote and accelerate protein folding. The chain is Chaperonin GroEL from Alkaliphilus oremlandii (strain OhILAs) (Clostridium oremlandii (strain OhILAs)).